The chain runs to 507 residues: ATP synthase subunit alpha, chloroplastic (507 aa).

Residue G170 to T177 coordinates ATP. The residue at position 257 (T257) is a Phosphothreonine.

This sequence belongs to the ATPase alpha/beta chains family. F-type ATPases have 2 components, CF(1) - the catalytic core - and CF(0) - the membrane proton channel. CF(1) has five subunits: alpha(3), beta(3), gamma(1), delta(1), epsilon(1). CF(0) has four main subunits: a, b, b' and c.

It is found in the plastid. It localises to the chloroplast thylakoid membrane. It carries out the reaction ATP + H2O + 4 H(+)(in) = ADP + phosphate + 5 H(+)(out). Functionally, produces ATP from ADP in the presence of a proton gradient across the membrane. The alpha chain is a regulatory subunit. The polypeptide is ATP synthase subunit alpha, chloroplastic (Aethionema cordifolium (Lebanon stonecress)).